The chain runs to 451 residues: MENDQFLQKQHFLILGLAKSGYAAASILHEKGIYVAVNDQKPFEENEPAQKLSEKGIEVVCGEHPVSLFDQHQITILIKNPGIPYENIMVQEAEKRGIPVWTEIELAYYLTSAKFIGITGSNGKTTTTTLIYEMLKADSQKALIAGNIGTVASEVAYHADGDEWIVTELSSFQLMGTHAFRPEISLILNVFDAHLDYHHTRENYEKAKQKVYLHQTASDKAIVNQDDETVVRLAEAGKAEIVPFSVSKTLEQGAYVKDSMIMFNGEAILPLEEVVLPGAHNLENILAAIAVVKTAGASNEAVKKVLTSFTGVKHRLQYVTTVNGRKFYNDSKATNILATSKALSAFDKPVILLAGGLDRGNGFDDLKPYMKHVKAVLTFGQTAPKLEKLGNELGIQHVKRVDNVEQAVSAAFALSNEGDVILLSPACASWDQFKTFEERGDMFIDAVHMLK.

120–126 (GSNGKTT) contacts ATP.

The protein belongs to the MurCDEF family.

It localises to the cytoplasm. The catalysed reaction is UDP-N-acetyl-alpha-D-muramoyl-L-alanine + D-glutamate + ATP = UDP-N-acetyl-alpha-D-muramoyl-L-alanyl-D-glutamate + ADP + phosphate + H(+). It participates in cell wall biogenesis; peptidoglycan biosynthesis. Its function is as follows. Cell wall formation. Catalyzes the addition of glutamate to the nucleotide precursor UDP-N-acetylmuramoyl-L-alanine (UMA). The polypeptide is UDP-N-acetylmuramoylalanine--D-glutamate ligase (murD) (Bacillus subtilis (strain 168)).